A 483-amino-acid polypeptide reads, in one-letter code: Protein nucleotidyltransferase YdiU (483 aa).

The ATP site is built by glycine 81, glycine 83, arginine 84, lysine 103, aspartate 115, glycine 116, arginine 166, and arginine 173. Residue aspartate 244 is the Proton acceptor of the active site. Mg(2+) contacts are provided by asparagine 245 and aspartate 254. Aspartate 254 serves as a coordination point for ATP.

This sequence belongs to the SELO family. Mg(2+) serves as cofactor. It depends on Mn(2+) as a cofactor.

The enzyme catalyses L-seryl-[protein] + ATP = 3-O-(5'-adenylyl)-L-seryl-[protein] + diphosphate. It carries out the reaction L-threonyl-[protein] + ATP = 3-O-(5'-adenylyl)-L-threonyl-[protein] + diphosphate. The catalysed reaction is L-tyrosyl-[protein] + ATP = O-(5'-adenylyl)-L-tyrosyl-[protein] + diphosphate. It catalyses the reaction L-histidyl-[protein] + UTP = N(tele)-(5'-uridylyl)-L-histidyl-[protein] + diphosphate. The enzyme catalyses L-seryl-[protein] + UTP = O-(5'-uridylyl)-L-seryl-[protein] + diphosphate. It carries out the reaction L-tyrosyl-[protein] + UTP = O-(5'-uridylyl)-L-tyrosyl-[protein] + diphosphate. In terms of biological role, nucleotidyltransferase involved in the post-translational modification of proteins. It can catalyze the addition of adenosine monophosphate (AMP) or uridine monophosphate (UMP) to a protein, resulting in modifications known as AMPylation and UMPylation. This is Protein nucleotidyltransferase YdiU from Shewanella halifaxensis (strain HAW-EB4).